Here is a 393-residue protein sequence, read N- to C-terminus: Protein TsgA (393 aa).

Helical transmembrane passes span 11–31, 51–71, 78–98, 101–121, 134–154, 162–182, 206–226, 245–265, 273–293, 298–318, 332–352, and 361–381; these read WISFLSYALTGALVIVTGMVM, FLNAGILISIFLNAWLMEIVP, FGFILMVLAVAGLMFSHSLAL, AAMFVLGLVSGITMSIGTFLI, LLFTDSFFSMAGMIFPMVAAF, WYWVYACIGLVYLAIFILTFG, IGVLFLAVAALCYILGQLGFI, ALVSDFWMSYMFGMWAFSFIL, ILTVLAGMAAVLMYLFITGTQ, WFILTLGFFSSAIYTSIITLG, FILTCGTIGTMLTFVVTGPIV, and LLTANGLYAVVFVMCFALGFV.

Belongs to the major facilitator superfamily. TsgA family.

Its subcellular location is the cell inner membrane. The polypeptide is Protein TsgA (Salmonella heidelberg (strain SL476)).